A 384-amino-acid polypeptide reads, in one-letter code: Glucans biosynthesis protein C (384 aa).

The next 10 membrane-spanning stretches (helical) occupy residues 17–37 (AWLMLLGIPFHISLIYSTHSW), 54–74 (FIHAFRMQVFFVISGYFSYML), 91–111 (VGIPMLTAIPLLTLPQFILLQ), 140–160 (LWFLLVLVILTTVSIGIFTWF), 173–193 (AISLVRLSLIFFLLGMAYAAI), 212–232 (FIVMQTLFYVPFFILGALAFI), 240–260 (FTTPSRGCTLGAAVAFIAYLL), 274–294 (TESVITMVMGLWMVNVVFSLG), 311–331 (ASLFIYLVHHPLTLFFGAYIT), and 338–358 (LIGFLCGLIFVMGIALILYEI).

The protein belongs to the acyltransferase 3 family. OpgC subfamily.

The protein resides in the cell membrane. It participates in glycan metabolism; osmoregulated periplasmic glucan (OPG) biosynthesis. In terms of biological role, necessary for the succinyl substitution of periplasmic glucans. Could catalyze the transfer of succinyl residues from the cytoplasmic side of the membrane to the nascent glucan backbones on the periplasmic side of the membrane. The protein is Glucans biosynthesis protein C of Salmonella choleraesuis (strain SC-B67).